We begin with the raw amino-acid sequence, 409 residues long: Probable ferredoxin reductase CtmF (409 aa).

Positions 15, 37, 50, 83, 279, and 298 each coordinate FAD.

It belongs to the FAD-dependent oxidoreductase family. FAD serves as cofactor.

It functions in the pathway terpene metabolism; monoterpene degradation. Its function is as follows. Involved in the degradation of the cyclic monoterpene limonene. Probably part of an electron transfer system involved in the oxidation of limonene to perillyl alcohol. In Castellaniella defragrans (strain DSM 12143 / CCUG 39792 / 65Phen) (Alcaligenes defragrans), this protein is Probable ferredoxin reductase CtmF.